Here is a 260-residue protein sequence, read N- to C-terminus: Sugar fermentation stimulation protein homolog (260 aa).

Belongs to the SfsA family.

This Chloroflexus aggregans (strain MD-66 / DSM 9485) protein is Sugar fermentation stimulation protein homolog.